The following is a 187-amino-acid chain: Threonylcarbamoyl-AMP synthase (187 aa).

Positions 3-187 constitute a YrdC-like domain; it reads EVLPADVAEL…AKSGQVIRKG (185 aa).

The protein belongs to the SUA5 family. TsaC subfamily.

It is found in the cytoplasm. The enzyme catalyses L-threonine + hydrogencarbonate + ATP = L-threonylcarbamoyladenylate + diphosphate + H2O. Functionally, required for the formation of a threonylcarbamoyl group on adenosine at position 37 (t(6)A37) in tRNAs that read codons beginning with adenine. Catalyzes the conversion of L-threonine, HCO(3)(-)/CO(2) and ATP to give threonylcarbamoyl-AMP (TC-AMP) as the acyladenylate intermediate, with the release of diphosphate. The chain is Threonylcarbamoyl-AMP synthase from Shewanella halifaxensis (strain HAW-EB4).